Here is a 944-residue protein sequence, read N- to C-terminus: Putative ATP-dependent RNA helicase (944 aa).

The region spanning 66–235 (TTPRSPIDGI…VPLHNLLMKL (170 aa)) is the Helicase ATP-binding domain. Residue 79-86 (HGVGTGKT) participates in ATP binding. Residues 183–186 (DEAH) carry the DEAH box motif. Positions 451–523 (CLTREVMTVP…QIIGRGIRYQ (73 aa)) constitute a Helicase C-terminal domain.

Belongs to the DEAD box helicase family. DEAH subfamily.

The enzyme catalyses ATP + H2O = ADP + phosphate + H(+). This chain is Putative ATP-dependent RNA helicase, found in Heliothis virescens ascovirus 3e (HvAV-3e).